A 171-amino-acid polypeptide reads, in one-letter code: 3-hydroxydecanoyl-[acyl-carrier-protein] dehydratase (171 aa).

His70 is a catalytic residue.

The protein belongs to the thioester dehydratase family. FabA subfamily. As to quaternary structure, homodimer.

The protein localises to the cytoplasm. It carries out the reaction a (3R)-hydroxyacyl-[ACP] = a (2E)-enoyl-[ACP] + H2O. The enzyme catalyses (3R)-hydroxydecanoyl-[ACP] = (2E)-decenoyl-[ACP] + H2O. It catalyses the reaction (2E)-decenoyl-[ACP] = (3Z)-decenoyl-[ACP]. The protein operates within lipid metabolism; fatty acid biosynthesis. In terms of biological role, necessary for the introduction of cis unsaturation into fatty acids. Catalyzes the dehydration of (3R)-3-hydroxydecanoyl-ACP to E-(2)-decenoyl-ACP and then its isomerization to Z-(3)-decenoyl-ACP. Can catalyze the dehydratase reaction for beta-hydroxyacyl-ACPs with saturated chain lengths up to 16:0, being most active on intermediate chain length. The sequence is that of 3-hydroxydecanoyl-[acyl-carrier-protein] dehydratase from Shewanella putrefaciens (strain CN-32 / ATCC BAA-453).